The following is a 281-amino-acid chain: MIENRPWLTIFSHTMLILGIAVILFPLYVAFVAATLDKQAVYAAPMTLIPGTHLLENIHNIWVNGVGTNSAPFWRMLLNSFVMAFSITLGKITVSMLSAFAIVWFRFPLRNLFFWMIFITLMLPVEVRIFPTVEVIANLKMLDSYAGLTLPLMASATATFLFRQFFMTLPDELVEAARIDGASPMRFFCDIVFPLSKTNLAALFVITFIYGWNQYLWPLLIITDVDLGTTVAGIKGMIATGEGTTEWNSVMAAMLLTLIPPVVIVLVMQRAFVRGLVDSEK.

Helical transmembrane passes span 16-36 (LILGIAVILFPLYVAFVAATL), 85-105 (FSITLGKITVSMLSAFAIVWF), 113-133 (FFWMIFITLMLPVEVRIFPTV), 142-162 (LDSYAGLTLPLMASATATFLF), 202-222 (ALFVITFIYGWNQYLWPLLII), and 247-267 (WNSVMAAMLLTLIPPVVIVLV). The ABC transmembrane type-1 domain occupies 77 to 268 (LLNSFVMAFS…IPPVVIVLVM (192 aa)).

It belongs to the binding-protein-dependent transport system permease family. UgpAE subfamily. The complex is composed of two ATP-binding proteins (UgpC), two transmembrane proteins (UgpA and UgpE) and a solute-binding protein (UgpB).

The protein resides in the cell inner membrane. Its function is as follows. Part of the ABC transporter complex UgpBAEC involved in sn-glycerol-3-phosphate (G3P) import. Probably responsible for the translocation of the substrate across the membrane. The protein is sn-glycerol-3-phosphate transport system permease protein UgpE (ugpE) of Escherichia coli O157:H7.